Consider the following 419-residue polypeptide: Arginine biosynthesis bifunctional protein ArgJ 1, mitochondrial (419 aa).

Substrate-binding residues include lysine 177, threonine 188, glutamate 275, asparagine 414, and threonine 419. The active-site Nucleophile is the threonine 188.

The protein belongs to the ArgJ family. In terms of assembly, heterodimer of an alpha and a beta chain. Post-translationally, the alpha and beta chains are autoproteolytically processed from a single precursor protein within the mitochondrion.

The protein resides in the mitochondrion matrix. It carries out the reaction N(2)-acetyl-L-ornithine + L-glutamate = N-acetyl-L-glutamate + L-ornithine. The enzyme catalyses L-glutamate + acetyl-CoA = N-acetyl-L-glutamate + CoA + H(+). It functions in the pathway amino-acid biosynthesis; L-arginine biosynthesis; L-ornithine and N-acetyl-L-glutamate from L-glutamate and N(2)-acetyl-L-ornithine (cyclic): step 1/1. Its pathway is amino-acid biosynthesis; L-arginine biosynthesis; N(2)-acetyl-L-ornithine from L-glutamate: step 1/4. Catalyzes two activities which are involved in the cyclic version of arginine biosynthesis: the synthesis of acetylglutamate from glutamate and acetyl-CoA, and of ornithine by transacetylation between acetylornithine and glutamate. This is Arginine biosynthesis bifunctional protein ArgJ 1, mitochondrial from Sclerotinia sclerotiorum (strain ATCC 18683 / 1980 / Ss-1) (White mold).